Consider the following 278-residue polypeptide: Multidrug-efflux transporter 1 regulator (278 aa).

An HTH merR-type domain is found at 5–75 (YYSIGEVSKL…LEEMKKAQDL (71 aa)). A DNA-binding region (H-T-H motif) is located at residues 8-27 (IGEVSKLANVSIKALRYYDK).

In terms of assembly, binds DNA as a homodimer.

Activates transcription of the bmr gene in response to structurally dissimilar drugs. Binds rhodamine as an inducer. This Bacillus subtilis (strain 168) protein is Multidrug-efflux transporter 1 regulator (bmrR).